A 239-amino-acid chain; its full sequence is Proteasome subunit beta type-6 (239 aa).

Alanine 2 carries the N-acetylalanine modification. Residues 2-34 constitute a propeptide, removed in mature form; the sequence is AATLLAARGAGPAPAWGPEAFTPDWESREVSTG. Residue threonine 35 is the Nucleophile of the active site. A Phosphothreonine modification is found at threonine 69.

The protein belongs to the peptidase T1B family. In terms of assembly, the 26S proteasome consists of a 20S proteasome core and two 19S regulatory subunits. The 20S proteasome core is a barrel-shaped complex made of 28 subunits that are arranged in four stacked rings. The two outer rings are each formed by seven alpha subunits, and the two inner rings are formed by seven beta subunits. The proteolytic activity is exerted by three beta-subunits PSMB5, PSMB6 and PSMB7. (Microbial infection) Interacts with HIV-1 protein Tat.

The protein resides in the cytoplasm. It localises to the nucleus. The catalysed reaction is Cleavage of peptide bonds with very broad specificity.. Its function is as follows. Component of the 20S core proteasome complex involved in the proteolytic degradation of most intracellular proteins. This complex plays numerous essential roles within the cell by associating with different regulatory particles. Associated with two 19S regulatory particles, forms the 26S proteasome and thus participates in the ATP-dependent degradation of ubiquitinated proteins. The 26S proteasome plays a key role in the maintenance of protein homeostasis by removing misfolded or damaged proteins that could impair cellular functions, and by removing proteins whose functions are no longer required. Associated with the PA200 or PA28, the 20S proteasome mediates ubiquitin-independent protein degradation. This type of proteolysis is required in several pathways including spermatogenesis (20S-PA200 complex) or generation of a subset of MHC class I-presented antigenic peptides (20S-PA28 complex). Within the 20S core complex, PSMB6 displays a peptidylglutamyl-hydrolizing activity also termed postacidic or caspase-like activity, meaning that the peptides bond hydrolysis occurs directly after acidic residues. The sequence is that of Proteasome subunit beta type-6 from Homo sapiens (Human).